The primary structure comprises 345 residues: MDSTLGLEIIEVVEQAAIASAKWMGKGEKNTADQVAVEAMRERMNKIHMRGRIVIGEGERDDAPMLYIGEEVGICTREDAKSFCNPDELVEIDIAVDPCEGTNLVAYGQNGSMAVLAISEKGGLFAAPDFYMKKLAAPPAAKGHVDIDKSATENLKILSDCLNRSIEELVVVVMDRPRHKELIQEIRNAGARVRLISDGDVSAAISCAFSGTNIHALMGIGAAPEGVISAAAMRCLGGHFQGQLIYDPEVVKTGLIGESREGNLERLASMGIKNPDQVYNCEELACGETVLFAACGITPGTLMEGVRFFHGGVRTQSLVISSQSSTARFVDTVHMKESPKVIQLH.

The Mn(2+) site is built by aspartate 33, glutamate 57, aspartate 97, and glutamate 100. Residues 100 to 102 (EGT), tyrosine 131, 176 to 178 (RPR), and 198 to 200 (DGD) contribute to the substrate site. Glutamate 225 is a Mn(2+) binding site.

Belongs to the FBPase class 2 family. As to quaternary structure, homotetramer. Requires Mn(2+) as cofactor.

The catalysed reaction is beta-D-fructose 1,6-bisphosphate + H2O = beta-D-fructose 6-phosphate + phosphate. It carries out the reaction D-sedoheptulose 1,7-bisphosphate + H2O = D-sedoheptulose 7-phosphate + phosphate. It functions in the pathway carbohydrate biosynthesis; Calvin cycle. In terms of biological role, catalyzes the hydrolysis of fructose 1,6-bisphosphate (Fru 1,6-P2) and sedoheptulose 1,7-bisphosphate (Sed 1,7-P2) to fructose 6-phosphate and sedoheptulose 7-phosphate, respectively. The chain is D-fructose 1,6-bisphosphatase class 2/sedoheptulose 1,7-bisphosphatase from Synechocystis sp. (strain ATCC 27184 / PCC 6803 / Kazusa).